Reading from the N-terminus, the 369-residue chain is S-(hydroxymethyl)glutathione dehydrogenase (369 aa).

C40, H62, C92, C95, C98, C106, and C169 together coordinate Zn(2+).

It belongs to the zinc-containing alcohol dehydrogenase family. Class-III subfamily. In terms of assembly, homodimer. The cofactor is Zn(2+).

It localises to the cytoplasm. The enzyme catalyses S-(hydroxymethyl)glutathione + NADP(+) = S-formylglutathione + NADPH + H(+). It catalyses the reaction S-(hydroxymethyl)glutathione + NAD(+) = S-formylglutathione + NADH + H(+). It carries out the reaction a primary alcohol + NAD(+) = an aldehyde + NADH + H(+). The catalysed reaction is a secondary alcohol + NAD(+) = a ketone + NADH + H(+). The enzyme catalyses S-nitrosoglutathione + NADH + H(+) = S-(hydroxysulfenamide)glutathione + NAD(+). Functionally, has high formaldehyde dehydrogenase activity in the presence of glutathione and catalyzes the oxidation of normal alcohols in a reaction that is not GSH-dependent. In addition, hemithiolacetals other than those formed from GSH, including omega-thiol fatty acids, also are substrates. Also acts as a S-nitroso-glutathione reductase by catalyzing the NADH-dependent reduction of S-nitrosoglutathione. In Photobacterium damsela subsp. piscicida (Pasteurella piscicida), this protein is S-(hydroxymethyl)glutathione dehydrogenase (frmA).